The sequence spans 488 residues: Glutamyl-tRNA(Gln) amidotransferase subunit A (488 aa).

Residues lysine 77 and serine 152 each act as charge relay system in the active site. The active-site Acyl-ester intermediate is serine 176.

The protein belongs to the amidase family. GatA subfamily. Heterotrimer of A, B and C subunits.

The enzyme catalyses L-glutamyl-tRNA(Gln) + L-glutamine + ATP + H2O = L-glutaminyl-tRNA(Gln) + L-glutamate + ADP + phosphate + H(+). Allows the formation of correctly charged Gln-tRNA(Gln) through the transamidation of misacylated Glu-tRNA(Gln) in organisms which lack glutaminyl-tRNA synthetase. The reaction takes place in the presence of glutamine and ATP through an activated gamma-phospho-Glu-tRNA(Gln). The sequence is that of Glutamyl-tRNA(Gln) amidotransferase subunit A from Streptococcus pneumoniae (strain JJA).